A 458-amino-acid polypeptide reads, in one-letter code: MSSSIKEVQGAPVKWVTNWTPEAIRGLVDQEKGLLDPRIYADQSLYELELERVFGRSWLLLGHESHVPETGDFLATYMGEDPVVMVRQKDKSIKVFLNQCRHRGMRICRSDAGNAKAFTCSYHGWAYDIAGKLVNVPFEKEAFCDKKEGDCGFDKAEWGPLQARVATYKGLVFANWDVQAPDLETYLGDARPYMDVMLDRTPAGTVAIGGMQKWVIPCNWKFAAEQFCSDMYHAGTMSHLSGILAGMPPEMDLSHAQVPTKGNQFRAGWGGHGSGWFVDEPGMLMAVMGPKVTQYWTEGPAADLAEQRLGHTMPVRRMFGQHMSVFPTCSFLPAINTIRTWHPRGPNEIEVWAFTLVDADAPAEIKEEYRRHNIRTFSAGGVFEQDDGENWVEIQKGLRGYKAKSQPLNAQMGLGRSQTGHPDFPGNVGYVYAEEAARGMYHHWMRMMSEPSWATLKP.

In terms of domain architecture, Rieske spans 58–156; that stretch reads WLLLGHESHV…KEGDCGFDKA (99 aa). Cys-100, His-102, Cys-120, and His-123 together coordinate [2Fe-2S] cluster. Residues His-233 and His-239 each coordinate Fe cation.

The protein belongs to the bacterial ring-hydroxylating dioxygenase alpha subunit family. As to quaternary structure, heterohexamer consisting of three BphA subunits and three BphE subunits. A ferredoxin (BphF) and a ferredoxin reductase (BphG) must be present to obtain activity. The cofactor is [2Fe-2S] cluster. Fe cation is required as a cofactor.

The catalysed reaction is biphenyl + NADH + O2 + H(+) = (2R,3S)-3-phenylcyclohexa-3,5-diene-1,2-diol + NAD(+). It participates in xenobiotic degradation; biphenyl degradation; 2-hydroxy-2,4-pentadienoate and benzoate from biphenyl: step 1/4. This is Biphenyl dioxygenase subunit alpha (bphA) from Metapseudomonas furukawaii (Pseudomonas furukawaii).